Consider the following 262-residue polypeptide: Adenosylcobinamide-GDP ribazoletransferase (262 aa).

Helical transmembrane passes span 43–63 (YFGL…WLTQ), 66–86 (LPAG…TGGF), 120–140 (GALA…ELAL), 146–166 (AGSA…SLIF), 191–211 (LFIL…IAAL), and 242–262 (AAQQ…GGIL).

It belongs to the CobS family. It depends on Mg(2+) as a cofactor.

It is found in the cell inner membrane. It catalyses the reaction alpha-ribazole + adenosylcob(III)inamide-GDP = adenosylcob(III)alamin + GMP + H(+). The enzyme catalyses alpha-ribazole 5'-phosphate + adenosylcob(III)inamide-GDP = adenosylcob(III)alamin 5'-phosphate + GMP + H(+). It functions in the pathway cofactor biosynthesis; adenosylcobalamin biosynthesis; adenosylcobalamin from cob(II)yrinate a,c-diamide: step 7/7. Its function is as follows. Joins adenosylcobinamide-GDP and alpha-ribazole to generate adenosylcobalamin (Ado-cobalamin). Also synthesizes adenosylcobalamin 5'-phosphate from adenosylcobinamide-GDP and alpha-ribazole 5'-phosphate. The polypeptide is Adenosylcobinamide-GDP ribazoletransferase (Shewanella oneidensis (strain ATCC 700550 / JCM 31522 / CIP 106686 / LMG 19005 / NCIMB 14063 / MR-1)).